The chain runs to 588 residues: Lysophospholipase 2 (588 aa).

Positions 15–38 (NRALPNAPDGYTPQGETCPSKRPS) are disordered. The 544-residue stretch at 31–574 (TCPSKRPSIR…KTYCWNGTIN (544 aa)) folds into the PLA2c domain. N41, N58, N77, N84, N88, N119, N123, N157, N167, N228, N272, N302, N340, N431, N449, N478, N481, N501, N510, N529, N553, N570, and N574 each carry an N-linked (GlcNAc...) asparagine glycan.

This sequence belongs to the lysophospholipase family.

It catalyses the reaction a 1-acyl-sn-glycero-3-phosphocholine + H2O = sn-glycerol 3-phosphocholine + a fatty acid + H(+). Catalyzes the release of fatty acids from lysophospholipids. The sequence is that of Lysophospholipase 2 (plb2) from Aspergillus fumigatus (strain ATCC MYA-4609 / CBS 101355 / FGSC A1100 / Af293) (Neosartorya fumigata).